We begin with the raw amino-acid sequence, 1044 residues long: Multiple epidermal growth factor-like domains protein 11 (1044 aa).

Positions 1–19 (MVLSLTGLIAFSFLQATLA) are cleaved as a signal peptide. Topologically, residues 20–848 (LNPEDPNVCS…SPALGAERHS (829 aa)) are extracellular. An EMI domain is found at 24–101 (DPNVCSHWES…YYESGDFCIP (78 aa)). Disulfide bonds link cysteine 28–cysteine 89, cysteine 54–cysteine 63, cysteine 88–cysteine 99, cysteine 103–cysteine 118, cysteine 120–cysteine 129, cysteine 146–cysteine 154, cysteine 148–cysteine 161, cysteine 163–cysteine 172, cysteine 185–cysteine 197, cysteine 191–cysteine 204, cysteine 206–cysteine 215, cysteine 228–cysteine 240, cysteine 234–cysteine 247, and cysteine 249–cysteine 258. EGF-like domains lie at 95–130 (SGDF…PDCS), 143–173 (SNRC…WRCE), 181–216 (HGKG…VYCE), 224–259 (HGAH…AVCA), 267–302 (FGQN…DRCQ), 310–345 (FGFQ…PRCQ), 399–434 (YGDG…EVCA), 442–477 (YGPN…LDCT), and 490–520 (NESC…DTCE). Asparagine 270 carries N-linked (GlcNAc...) asparagine glycosylation. Cystine bridges form between cysteine 271/cysteine 283, cysteine 277/cysteine 290, cysteine 292/cysteine 301, cysteine 314/cysteine 326, cysteine 320/cysteine 333, cysteine 335/cysteine 344, cysteine 403/cysteine 415, cysteine 409/cysteine 422, cysteine 424/cysteine 433, cysteine 446/cysteine 458, cysteine 452/cysteine 465, cysteine 467/cysteine 476, cysteine 493/cysteine 501, cysteine 495/cysteine 508, and cysteine 510/cysteine 519. N-linked (GlcNAc...) asparagine glycosylation is present at asparagine 531. EGF-like domains are found at residues 571 to 606 (WGPN…PLCQ), 659 to 694 (FGQD…KDCS), 707 to 737 (FHAC…LFCT), 750 to 780 (GRVC…QHCE), and 788 to 823 (FGYG…IRCD). 15 disulfides stabilise this stretch: cysteine 575/cysteine 587, cysteine 581/cysteine 594, cysteine 596/cysteine 605, cysteine 663/cysteine 675, cysteine 669/cysteine 682, cysteine 684/cysteine 693, cysteine 710/cysteine 718, cysteine 712/cysteine 725, cysteine 727/cysteine 736, cysteine 753/cysteine 761, cysteine 755/cysteine 768, cysteine 770/cysteine 779, cysteine 792/cysteine 804, cysteine 798/cysteine 811, and cysteine 813/cysteine 822. The helical transmembrane segment at 849-869 (VGAVTGIMLLLFLIVVLLGLF) threads the bilayer. The Cytoplasmic portion of the chain corresponds to 870 to 1044 (AWHRRRQKEK…ANGPSQDKQS (175 aa)). The interval 1023-1044 (GHYDLLPVRQSPANGPSQDKQS) is disordered. A compositionally biased stretch (polar residues) spans 1033–1044 (SPANGPSQDKQS).

It belongs to the MEGF family. In terms of assembly, homomer. Does not interact with MEGF10.

Its subcellular location is the cell membrane. The protein localises to the basolateral cell membrane. Functionally, may regulate the mosaic spacing of specific neuron subtypes in the retina through homotypic retinal neuron repulsion. Mosaics provide a mechanism to distribute each cell type evenly across the retina, ensuring that all parts of the visual field have access to a full set of processing elements. The polypeptide is Multiple epidermal growth factor-like domains protein 11 (MEGF11) (Homo sapiens (Human)).